Here is a 436-residue protein sequence, read N- to C-terminus: GTPase Der (436 aa).

EngA-type G domains are found at residues 4 to 167 (PTIA…PNTS) and 175 to 351 (IKFS…MNQN). Residues 10 to 17 (GRPNVGKS), 57 to 61 (DTGGI), 119 to 122 (NKVD), 181 to 188 (GRPNVGKS), 229 to 233 (DTAGM), and 294 to 297 (NKWD) contribute to the GTP site. A KH-like domain is found at 352 to 436 (LRIPSALLND…PIKIIPRRRK (85 aa)).

This sequence belongs to the TRAFAC class TrmE-Era-EngA-EngB-Septin-like GTPase superfamily. EngA (Der) GTPase family. In terms of assembly, associates with the 50S ribosomal subunit.

In terms of biological role, GTPase that plays an essential role in the late steps of ribosome biogenesis. This is GTPase Der from Enterococcus faecalis (strain ATCC 700802 / V583).